Consider the following 292-residue polypeptide: 4-hydroxy-tetrahydrodipicolinate synthase (292 aa).

Thr-45 serves as a coordination point for pyruvate. Residue Tyr-133 is the Proton donor/acceptor of the active site. The active-site Schiff-base intermediate with substrate is Lys-161. Ile-203 serves as a coordination point for pyruvate.

The protein belongs to the DapA family. In terms of assembly, homotetramer; dimer of dimers.

It is found in the cytoplasm. The catalysed reaction is L-aspartate 4-semialdehyde + pyruvate = (2S,4S)-4-hydroxy-2,3,4,5-tetrahydrodipicolinate + H2O + H(+). The protein operates within amino-acid biosynthesis; L-lysine biosynthesis via DAP pathway; (S)-tetrahydrodipicolinate from L-aspartate: step 3/4. In terms of biological role, catalyzes the condensation of (S)-aspartate-beta-semialdehyde [(S)-ASA] and pyruvate to 4-hydroxy-tetrahydrodipicolinate (HTPA). This chain is 4-hydroxy-tetrahydrodipicolinate synthase, found in Nitrosomonas eutropha (strain DSM 101675 / C91 / Nm57).